A 98-amino-acid chain; its full sequence is MAQLYDWLVETPANAEDLESRINTRPAHLEHNKPLIEAGTLVWGGPSLAAHPKAAGEDLAIVGSVMCIRAGSEEEVREMIRNDPYAKLGQVSIRMSVK.

This sequence belongs to the YciI family.

Its pathway is secondary metabolite biosynthesis. In terms of biological role, part of the gene cluster that mediates the biosynthesis of the antibiotic 2,4-dihydroxy-3-methyl-6-(2-oxopropyl)benzaldehyde (DHMBA) and its derivatives. The direct non-reducing polyketide synthase dbaI product is 2,4-dihydroxy-3-methyl-6-(2-oxopropyl)benzaldehyde (DHMBA), produced by condensation of one acetyl-CoA starter unit with 4 malonyl-CoA units and one methylation step. The FAD-dependent monooxygenase dbaH is responsible for the synthesis of yellow pigments derived from the oxidation of DHMBA. The roles of dbaB, C, E and F have still to be determined. The protein is Derivative of benzaldehyde biosynthesis cluster protein C of Emericella nidulans (strain FGSC A4 / ATCC 38163 / CBS 112.46 / NRRL 194 / M139) (Aspergillus nidulans).